A 331-amino-acid polypeptide reads, in one-letter code: (+)-aristolochene synthase TS1 (331 aa).

The interval 1–22 is disordered; the sequence is MTRMKNSSSNVTSASGSGSGSG. Over residues 7–16 the composition is skewed to low complexity; that stretch reads SSSNVTSASG. 4 residues coordinate Mg(2+): Asp102, Asn231, Ser235, and Glu239. Positions 102-106 match the DDxx(x)D/E motif motif; sequence DDLLE. An NDxxSxxxD/E motif motif is present at residues 231–239; sequence NDVYSYEKE. (2E,6E)-farnesyl diphosphate is bound by residues Arg326 and Tyr327.

Belongs to the terpene synthase family. Homodimer. It depends on Mg(2+) as a cofactor.

It catalyses the reaction (2E,6E)-farnesyl diphosphate = (+)-aristolochene + diphosphate. It functions in the pathway sesquiterpene biosynthesis; aristolochene biosynthesis; aristolochene from farnesyl diphosphate: step 1/1. Catalyzes the cyclization of trans,trans-farnesyl diphosphate (FPP) to the bicyclic sesquiterpene aristolochene. Aristolochene is the likely parent compound for a number of sesquiterpenoid toxins produced by filamentous fungi. This Penicillium expansum (Blue mold rot fungus) protein is (+)-aristolochene synthase TS1.